The primary structure comprises 339 residues: Anthranilate phosphoribosyltransferase (339 aa).

5-phospho-alpha-D-ribose 1-diphosphate contacts are provided by residues G81, 84–85, S89, 91–94, 109–117, and A121; these read GD, NVSS, and KHGNRALSS. An anthranilate-binding site is contributed by G81. S93 is a binding site for Mg(2+). Residue N112 coordinates anthranilate. An anthranilate-binding site is contributed by R167. Residues D225 and E226 each coordinate Mg(2+).

The protein belongs to the anthranilate phosphoribosyltransferase family. As to quaternary structure, homodimer. Requires Mg(2+) as cofactor.

The catalysed reaction is N-(5-phospho-beta-D-ribosyl)anthranilate + diphosphate = 5-phospho-alpha-D-ribose 1-diphosphate + anthranilate. Its pathway is amino-acid biosynthesis; L-tryptophan biosynthesis; L-tryptophan from chorismate: step 2/5. In terms of biological role, catalyzes the transfer of the phosphoribosyl group of 5-phosphorylribose-1-pyrophosphate (PRPP) to anthranilate to yield N-(5'-phosphoribosyl)-anthranilate (PRA). The chain is Anthranilate phosphoribosyltransferase from Brucella canis (strain ATCC 23365 / NCTC 10854 / RM-666).